The following is a 136-amino-acid chain: UPF0275 protein PM0493 (136 aa).

It belongs to the UPF0275 family.

The sequence is that of UPF0275 protein PM0493 from Pasteurella multocida (strain Pm70).